A 2357-amino-acid chain; its full sequence is Protein transport protein Sec16A (2357 aa).

Disordered stretches follow at residues 1-25 (MQPP…RSVF) and 57-303 (FSRQ…STFR). 2 stretches are compositionally biased toward low complexity: residues 64–76 (STPL…SSPP) and 210–227 (QMPG…PSGQ). Polar residues predominate over residues 285–303 (HLQSGSHLANNSDPESTFR). Residues S296, S314, and S331 each carry the phosphoserine modification. Disordered stretches follow at residues 335 to 359 (NPLA…GSGC), 508 to 540 (APDA…ARPQ), 553 to 603 (KPED…TGIF), 758 to 828 (VQPP…NPPV), 924 to 987 (LLVQ…SSHQ), 1006 to 1038 (VNVY…PNLD), and 1059 to 1151 (QELV…APGP). Over residues 520–536 (SVSSSYSSRSHGRLSGS) the composition is skewed to low complexity. Phosphoserine is present on residues S559, S569, S587, S589, and S592. Position 593 is a phosphothreonine (T593). S595 carries the post-translational modification Phosphoserine. Polar residues-rich tracts occupy residues 766 to 778 (SGQQ…SAAP) and 803 to 825 (LQSQ…SLQN). Residues 1006–1028 (VNVYNPSHSDSLASQQSVASHPR) are compositionally biased toward polar residues. A required for localization to endoplasmic reticulum exit sites region spans residues 1019 to 1890 (SQQSVASHPR…QQVERQIKEG (872 aa)). S1069 is modified (phosphoserine). Polar residues predominate over residues 1080–1101 (ELSNPESLPAQGQAQNSAQSPA). The interval 1101–1400 (ASLVLVDAGQ…EAPLPPGSFH (300 aa)) is interaction with MIA3. The interval 1102–1405 (SLVLVDAGQQ…PGSFHGDFAY (304 aa)) is required for endoplasmic reticulum localization. A compositionally biased stretch (low complexity) spans 1118 to 1131 (QSSSVSLVSSGSGQ). The span at 1138 to 1151 (QPWPQPVPALAPGP) shows a compositional bias: pro residues. Residues S1207, S1229, and S1305 each carry the phosphoserine modification. The interval 1215 to 1248 (YPEPERPSSRASHSSERPPPRQGYPEGYYSSKSG) is disordered. Residues 1216–1233 (PEPERPSSRASHSSERPP) show a composition bias toward basic and acidic residues. Residues 1307-1322 (FGDRPEKRDNNWRYDP) are compositionally biased toward basic and acidic residues. Positions 1307 to 1378 (FGDRPEKRDN…SLSSHSHQSQ (72 aa)) are disordered. T1325 carries the post-translational modification Phosphothreonine. Phosphoserine is present on residues S1327, S1347, S1350, S1356, S1359, S1362, S1369, S1573, and S1601. The span at 1333–1354 (DPHRDPYGEEVDRRSVHSEHSA) shows a compositional bias: basic and acidic residues. A compositionally biased stretch (low complexity) spans 1356–1375 (SLHSAHSLASRRSSLSSHSH). The central conserved domain (CCD); mediates interaction with RNF183, LRRK2 and SEC13 stretch occupies residues 1434 to 1890 (QVSSRPTSPE…QQVERQIKEG (457 aa)). T1907 bears the Phosphothreonine mark. A phosphoserine mark is found at S1939, S1964, S2022, and S2042. Disordered regions lie at residues 2049-2110 (KFAN…SWFF), 2141-2181 (VNLN…PVNM), and 2226-2328 (NLFV…MPFY). Position 2054 is a phosphothreonine (T2054). Phosphoserine occurs at positions 2056, 2073, and 2083. The span at 2087–2106 (ETKRPGQAAKKETKEPKKGE) shows a compositional bias: basic and acidic residues. The tract at residues 2106–2357 (ESWFFRWLPG…IGQRKHLVLN (252 aa)) is required for interaction with SEC23A. A phosphoserine mark is found at S2271 and S2291. Composition is skewed to low complexity over residues 2289-2302 (ELSR…LSRE) and 2310-2324 (APGD…PSGA).

The protein belongs to the SEC16 family. SEC16A and SEC16B are each present in multiple copies in a heteromeric complex. Interacts with SEC23A. Interacts with RNF183 and RNF152. Interacts with LRRK2 (via ROC domain). Interacts with SEC13. Interacts with RAB10. Interacts with MIA3. Interacts with GORASP2 in response to ER stress. As to expression, ubiquitous. Expressed at higher levels in the pancreas.

The protein localises to the endoplasmic reticulum membrane. Its subcellular location is the golgi apparatus membrane. It localises to the cytoplasm. It is found in the perinuclear region. The protein resides in the cytosol. The protein localises to the microsome membrane. In terms of biological role, acts as a molecular scaffold that plays a key role in the organization of the endoplasmic reticulum exit sites (ERES), also known as transitional endoplasmic reticulum (tER). SAR1A-GTP-dependent assembly of SEC16A on the ER membrane forms an organized scaffold defining an ERES. Required for secretory cargo traffic from the endoplasmic reticulum to the Golgi apparatus. Mediates the recruitment of MIA3/TANGO to ERES. Regulates both conventional (ER/Golgi-dependent) and GORASP2-mediated unconventional (ER/Golgi-independent) trafficking of CFTR to cell membrane. Positively regulates the protein stability of E3 ubiquitin-protein ligases RNF152 and RNF183 and the ER localization of RNF183. Acts as a RAB10 effector in the regulation of insulin-induced SLC2A4/GLUT4 glucose transporter-enriched vesicles delivery to the cell membrane in adipocytes. In Homo sapiens (Human), this protein is Protein transport protein Sec16A (SEC16A).